The following is a 70-amino-acid chain: Bowman-Birk type proteinase inhibitor A-II (70 aa).

7 disulfide bridges follow: cysteine 11–cysteine 68, cysteine 12–cysteine 29, cysteine 15–cysteine 63, cysteine 17–cysteine 27, cysteine 36–cysteine 43, cysteine 40–cysteine 55, and cysteine 45–cysteine 53.

Belongs to the Bowman-Birk serine protease inhibitor family.

Its function is as follows. These proteins inhibit trypsin and chymotrypsin, having 2 sites of interaction with trypsin. The site of interaction with chymotrypsin has not been determined but is not independent of the trypsin-reactive sites. In Arachis hypogaea (Peanut), this protein is Bowman-Birk type proteinase inhibitor A-II.